The following is a 218-amino-acid chain: Thiamine-phosphate synthase (218 aa).

4-amino-2-methyl-5-(diphosphooxymethyl)pyrimidine-binding positions include 43–47 (QLRDK) and Asn75. Mg(2+)-binding residues include Asp76 and Asp95. Residue Ser114 coordinates 4-amino-2-methyl-5-(diphosphooxymethyl)pyrimidine. A 2-[(2R,5Z)-2-carboxy-4-methylthiazol-5(2H)-ylidene]ethyl phosphate-binding site is contributed by 141 to 143 (TPT). A 4-amino-2-methyl-5-(diphosphooxymethyl)pyrimidine-binding site is contributed by Lys144. Gly172 lines the 2-[(2R,5Z)-2-carboxy-4-methylthiazol-5(2H)-ylidene]ethyl phosphate pocket.

The protein belongs to the thiamine-phosphate synthase family. Mg(2+) is required as a cofactor.

The enzyme catalyses 2-[(2R,5Z)-2-carboxy-4-methylthiazol-5(2H)-ylidene]ethyl phosphate + 4-amino-2-methyl-5-(diphosphooxymethyl)pyrimidine + 2 H(+) = thiamine phosphate + CO2 + diphosphate. It carries out the reaction 2-(2-carboxy-4-methylthiazol-5-yl)ethyl phosphate + 4-amino-2-methyl-5-(diphosphooxymethyl)pyrimidine + 2 H(+) = thiamine phosphate + CO2 + diphosphate. It catalyses the reaction 4-methyl-5-(2-phosphooxyethyl)-thiazole + 4-amino-2-methyl-5-(diphosphooxymethyl)pyrimidine + H(+) = thiamine phosphate + diphosphate. It participates in cofactor biosynthesis; thiamine diphosphate biosynthesis; thiamine phosphate from 4-amino-2-methyl-5-diphosphomethylpyrimidine and 4-methyl-5-(2-phosphoethyl)-thiazole: step 1/1. Functionally, condenses 4-methyl-5-(beta-hydroxyethyl)thiazole monophosphate (THZ-P) and 2-methyl-4-amino-5-hydroxymethyl pyrimidine pyrophosphate (HMP-PP) to form thiamine monophosphate (TMP). The polypeptide is Thiamine-phosphate synthase (Thermobifida fusca (strain YX)).